A 32-amino-acid chain; its full sequence is Corticostatin-related peptide RK-1 (32 aa).

Disulfide bonds link cysteine 3/cysteine 29, cysteine 5/cysteine 19, and cysteine 9/cysteine 28.

It localises to the secreted. In terms of biological role, has antimicrobial activity against E.coli and activates ion channel activity. The protein is Corticostatin-related peptide RK-1 of Oryctolagus cuniculus (Rabbit).